A 689-amino-acid chain; its full sequence is Protein SDA1 homolog (689 aa).

Disordered stretches follow at residues 227–260 (DEKKDSDSESEDEGPTARDLMVRYSTGKKNTKNK), 485–512 (EQEKKEEPEEDDGWESASLSDDDEDGEW), and 623–689 (TDRK…RLMK). Residues 258 to 319 (KNKKKLDKAM…RFEVKLMHMD (62 aa)) are a coiled coil. A compositionally biased stretch (acidic residues) spans 492–512 (PEEDDGWESASLSDDDEDGEW). The span at 670–681 (RDKQIALRDSLL) shows a compositional bias: basic and acidic residues.

It belongs to the SDA1 family.

Its subcellular location is the nucleus. It is found in the nucleolus. Required for 60S pre-ribosomal subunits export to the cytoplasm. This Xenopus laevis (African clawed frog) protein is Protein SDA1 homolog (sdad1).